The primary structure comprises 424 residues: GTPase Obg (424 aa).

The Obg domain maps to 1 to 158; sequence MFIDTAKIFV…RWIKLELKLL (158 aa). One can recognise an OBG-type G domain in the interval 159–331; sequence ADVGLIGFPN…LMKEAARLLS (173 aa). GTP-binding positions include 165-172, 190-194, 212-215, 282-285, and 312-314; these read GFPNVGKS, FTTLK, DIPG, NKSD, and SAA. Residues serine 172 and threonine 192 each contribute to the Mg(2+) site. An OCT domain is found at 345 to 424; that stretch reads RFIEEEKRFT…LNDFEFDFLL (80 aa).

Belongs to the TRAFAC class OBG-HflX-like GTPase superfamily. OBG GTPase family. Monomer. Mg(2+) is required as a cofactor.

The protein resides in the cytoplasm. Its function is as follows. An essential GTPase which binds GTP, GDP and possibly (p)ppGpp with moderate affinity, with high nucleotide exchange rates and a fairly low GTP hydrolysis rate. Plays a role in control of the cell cycle, stress response, ribosome biogenesis and in those bacteria that undergo differentiation, in morphogenesis control. The chain is GTPase Obg from Clostridium botulinum (strain Langeland / NCTC 10281 / Type F).